Here is a 220-residue protein sequence, read N- to C-terminus: Protein-L-isoaspartate O-methyltransferase (220 aa).

Residue Ser67 is part of the active site.

The protein belongs to the methyltransferase superfamily. L-isoaspartyl/D-aspartyl protein methyltransferase family.

Its subcellular location is the cytoplasm. It catalyses the reaction [protein]-L-isoaspartate + S-adenosyl-L-methionine = [protein]-L-isoaspartate alpha-methyl ester + S-adenosyl-L-homocysteine. In terms of biological role, catalyzes the methyl esterification of L-isoaspartyl residues in peptides and proteins that result from spontaneous decomposition of normal L-aspartyl and L-asparaginyl residues. It plays a role in the repair and/or degradation of damaged proteins. The polypeptide is Protein-L-isoaspartate O-methyltransferase (Chlorobium phaeobacteroides (strain BS1)).